A 284-amino-acid chain; its full sequence is Pantothenate synthetase (284 aa).

30–37 serves as a coordination point for ATP; sequence MGNLHDGH. Residue histidine 37 is the Proton donor of the active site. (R)-pantoate is bound at residue glutamine 61. Position 61 (glutamine 61) interacts with beta-alanine. Position 149-152 (149-152) interacts with ATP; it reads GEKD. Residue glutamine 155 coordinates (R)-pantoate. Residues valine 178 and 186 to 189 each bind ATP; that span reads LSSR.

This sequence belongs to the pantothenate synthetase family. Homodimer.

The protein localises to the cytoplasm. It carries out the reaction (R)-pantoate + beta-alanine + ATP = (R)-pantothenate + AMP + diphosphate + H(+). Its pathway is cofactor biosynthesis; (R)-pantothenate biosynthesis; (R)-pantothenate from (R)-pantoate and beta-alanine: step 1/1. Its function is as follows. Catalyzes the condensation of pantoate with beta-alanine in an ATP-dependent reaction via a pantoyl-adenylate intermediate. In Cronobacter sakazakii (strain ATCC BAA-894) (Enterobacter sakazakii), this protein is Pantothenate synthetase.